The sequence spans 315 residues: BTB/POZ domain-containing adapter for CUL3-mediated RhoA degradation protein 3 (315 aa).

N-acetylmethionine is present on methionine 1. A Phosphoserine modification is found at serine 23. In terms of domain architecture, BTB spans 32–100; the sequence is KYVKLNVGGA…LRDGGVPLPE (69 aa). A PCNA-binding motif is present at residues 239-245; the sequence is QTKVEFP. The segment at 269-294 is disordered; the sequence is NALLEATGGAAGRSHHLDEDEERERE.

It belongs to the BACURD family. Homotetramer; forms a two-fold symmetric tetramer in solution. Interacts with CUL3; interaction is direct and forms a 5:5 heterodecamer. Component of the BCR(BACURD3) E3 ubiquitin ligase complex, at least composed of CUL3, KCTD10/BACURD3 and RBX1. Interacts with DNA polymerase delta subunit 2/POLD2. Interacts with PCNA. Associated with the tectonic-like complex (also named B9 complex); however as Kctd10 has not been identified in all tectonic-like complexes purifications it is unclear whether it is really part of the complex.

The protein localises to the nucleus. Its pathway is protein modification; protein ubiquitination. Functionally, substrate-specific adapter of a BCR (BTB-CUL3-RBX1) E3 ubiquitin-protein ligase complex. The BCR(BACURD3) E3 ubiquitin ligase complex mediates the ubiquitination of target proteins, leading to their degradation by the proteasome. The chain is BTB/POZ domain-containing adapter for CUL3-mediated RhoA degradation protein 3 (Kctd10) from Mus musculus (Mouse).